The following is a 415-amino-acid chain: Casein kinase I isoform delta (415 aa).

The region spanning 9 to 277 (YRLGRKIGSG…YLRQLFRNLF (269 aa)) is the Protein kinase domain. Residues 15–23 (IGSGSFGDI) and K38 contribute to the ATP site. D128 acts as the Proton acceptor in catalysis. A centrosomal localization signal (CLS) region spans residues 278-364 (HRQGFSYDYV…TSPRPVSGME (87 aa)). Positions 301–315 (ADDAERERRDREERL) are enriched in basic and acidic residues. The tract at residues 301 to 415 (ADDAERERRD…SSGLQSVVHR (115 aa)) is disordered. Residues 317 to 342 (HSRNPATRGLPSTASGRLRGTQEVAP) form an autoinhibitory region. A phosphoserine mark is found at S328 and S331. Positions 347–358 (TPTSHTANTSPR) are enriched in polar residues. S370 carries the post-translational modification Phosphoserine. R375 is subject to Omega-N-methylarginine. Positions 380-400 (NISSSDLTGRQDTSRMSTSQI) are enriched in polar residues. Phosphoserine occurs at positions 382, 383, 384, 407, and 411.

This sequence belongs to the protein kinase superfamily. CK1 Ser/Thr protein kinase family. Casein kinase I subfamily. As to quaternary structure, monomer. Component of the circadian core oscillator, which includes the CRY proteins, CLOCK, or NPAS2, ARTNL/BMAL1 or ARTNL2/BMAL2, CSNK1D and/or CSNK1E, TIMELESS and the PER proteins. Interacts with DNMT1 and MAP1A. Interacts directly with PER1 and PER2 which may lead to their degradation. Interacts with MAPT/TAU, SNAPIN, DBNDD2, AIB1/NCOA3 and ESR1. Interacts with AKAP9/AKAP450; this interaction promotes centrosomal subcellular location. Binds to tubulins in mitotic cells upon DNA damage. Interacts with GJA1. Interacts with DDX3X; this interaction enhances CSNK1D kinase activity in vitro, but it is unclear whether this interaction is physiologically relevant. Interacts with FAM83A, FAM83B, FAM83E and FAM83H (via DUF1669). Autophosphorylated on serine and threonine residues; this autophosphorylation represses activity. Reactivated by phosphatase-mediated dephosphorylation. May be dephosphorylated by PP1.

Its subcellular location is the cytoplasm. The protein resides in the nucleus. It localises to the cytoskeleton. The protein localises to the microtubule organizing center. It is found in the centrosome. Its subcellular location is the perinuclear region. The protein resides in the cell membrane. It localises to the spindle. The protein localises to the golgi apparatus. The enzyme catalyses L-seryl-[protein] + ATP = O-phospho-L-seryl-[protein] + ADP + H(+). It catalyses the reaction L-threonyl-[protein] + ATP = O-phospho-L-threonyl-[protein] + ADP + H(+). The catalysed reaction is L-seryl-[tau protein] + ATP = O-phospho-L-seryl-[tau protein] + ADP + H(+). It carries out the reaction L-threonyl-[tau protein] + ATP = O-phospho-L-threonyl-[tau protein] + ADP + H(+). Its activity is regulated as follows. Exhibits substrate-dependent heparin activation. Drug-mediated inhibition leads to a delay of the oscillations with the magnitude of this effect dependent upon the timing of drug administration. Inhibited by phosphorylation. Functionally, essential serine/threonine-protein kinase that regulates diverse cellular growth and survival processes including Wnt signaling, DNA repair and circadian rhythms. It can phosphorylate a large number of proteins. Casein kinases are operationally defined by their preferential utilization of acidic proteins such as caseins as substrates. Phosphorylates connexin-43/GJA1, MAP1A, SNAPIN, MAPT/TAU, TOP2A, DCK, HIF1A, EIF6, p53/TP53, DVL2, DVL3, ESR1, AIB1/NCOA3, DNMT1, PKD2, YAP1, PER1 and PER2. Central component of the circadian clock. In balance with PP1, determines the circadian period length through the regulation of the speed and rhythmicity of PER1 and PER2 phosphorylation. Controls PER1 and PER2 nuclear transport and degradation. YAP1 phosphorylation promotes its SCF(beta-TRCP) E3 ubiquitin ligase-mediated ubiquitination and subsequent degradation. DNMT1 phosphorylation reduces its DNA-binding activity. Phosphorylation of ESR1 and AIB1/NCOA3 stimulates their activity and coactivation. Phosphorylation of DVL2 and DVL3 regulates WNT3A signaling pathway that controls neurite outgrowth. Phosphorylates NEDD9/HEF1. EIF6 phosphorylation promotes its nuclear export. Triggers down-regulation of dopamine receptors in the forebrain. Activates DCK in vitro by phosphorylation. TOP2A phosphorylation favors DNA cleavable complex formation. May regulate the formation of the mitotic spindle apparatus in extravillous trophoblast. Modulates connexin-43/GJA1 gap junction assembly by phosphorylation. Probably involved in lymphocyte physiology. Regulates fast synaptic transmission mediated by glutamate. This chain is Casein kinase I isoform delta (CSNK1D), found in Pongo abelii (Sumatran orangutan).